Here is a 115-residue protein sequence, read N- to C-terminus: Large ribosomal subunit protein bL20 (115 aa).

The protein belongs to the bacterial ribosomal protein bL20 family.

Its function is as follows. Binds directly to 23S ribosomal RNA and is necessary for the in vitro assembly process of the 50S ribosomal subunit. It is not involved in the protein synthesizing functions of that subunit. The protein is Large ribosomal subunit protein bL20 of Synechococcus sp. (strain RCC307).